Consider the following 429-residue polypeptide: Acetyltransferase pyr8 (429 aa).

The next 9 helical transmembrane spans lie at 12–32 (IAQELALYLAFTVPTAFVIIT), 39–56 (LRLAWTPCLLYILYRFSL), 69–89 (GVAAGQATVAALQCLNLLLIT), 154–174 (YVLRESAIIIWQYLLLDLIHM), 221–241 (VCLNIVSRIYCLVLVVLRISA), 300–320 (IFFTFFTSAVLHLACDAILGI), 324–344 (GSGAMPFFCVVPLAIMFEDGV), 365–385 (LVGFLWVGSWMYATSPWYLYP), and 409–429 (VAQKVLLVYGVVLYWAIGGEI).

Belongs to the wax synthase family.

It is found in the membrane. It functions in the pathway secondary metabolite biosynthesis; terpenoid biosynthesis. Functionally, acetyltransferase; part of the gene cluster that mediates the biosynthesis of pyripyropene A, a specific human acyl-coenzyme A:cholesterol acyltransferase 2 inhibitor. The first step of the pathway is the synthesis of nicotinyl-CoA from nicotinic acid by the nicotinic acid-CoA ligase pyr1. Nicotinyl-CoA is then a substrate of polyketide synthase pyr2 to produce 4-hydroxy-6-(3-pyridinyl)-2H-pyran-2-one (HPPO) which is further prenylated by the polyprenyl transferase pyr6 to yield farnesyl-HPPO. The next steps consist of an epoxidation of farnesyl-HPPO to epoxyfarnesyl-HPPO by FAD-dependent monooxygenase pyr5 and a cyclization of the terpenoid portion by the terpene cyclase pyr4 to yield deacetyl-pyripyropene E. The 2 cytochrome P450 monooxygenases pyr3 and pyr9, and the 2 acetyltransferases pyr7 and pyr8 are involved in the conversion of deacetyl-pyripyropene E into pyripyropene A through several cycles of oxidation and acetylation steps. Pyr7 acetylates deacetyl-pyripyropene E to pyripyropene E which is oxidized to 11-deacetyl-pyripyropene O by pyr3, which is in turn acetylated into pyripyropene O by pyr8. Pyripyropene O is then oxidized to deacetyl-pyripyropene A by pyr9. Deacetyl-pyripyropene A is finally acetylated to pyripyropene A by pyr8. The chain is Acetyltransferase pyr8 from Aspergillus fumigatus (strain ATCC MYA-4609 / CBS 101355 / FGSC A1100 / Af293) (Neosartorya fumigata).